The sequence spans 100 residues: Urease subunit gamma (100 aa).

The protein belongs to the urease gamma subunit family. As to quaternary structure, heterotrimer of UreA (gamma), UreB (beta) and UreC (alpha) subunits. Three heterotrimers associate to form the active enzyme.

It is found in the cytoplasm. The catalysed reaction is urea + 2 H2O + H(+) = hydrogencarbonate + 2 NH4(+). It participates in nitrogen metabolism; urea degradation; CO(2) and NH(3) from urea (urease route): step 1/1. This Micrococcus luteus (strain ATCC 4698 / DSM 20030 / JCM 1464 / CCM 169 / CCUG 5858 / IAM 1056 / NBRC 3333 / NCIMB 9278 / NCTC 2665 / VKM Ac-2230) (Micrococcus lysodeikticus) protein is Urease subunit gamma.